The chain runs to 146 residues: UPF0178 protein CTC_02403 (146 aa).

Belongs to the UPF0178 family.

This is UPF0178 protein CTC_02403 from Clostridium tetani (strain Massachusetts / E88).